The chain runs to 309 residues: MVSDEDELNLLVIIVDTNPIWWGKQALKESQFTLSKCIDAVMVLGNSHLFMNRSNKLAVIASHIQESRFLYPGKNGRLGDFFGDPGNPSSEFTPSGSKDGKYELLTAANEVIAEEIKDLMTKSDIEGQHTETLLAGSLAKALCYIHRMNKEVKDNQEMKSRILVIKAAEDSALQYMNFMNVIFAAQKQNILIDACVLDSDSGLLQQACDITGGLYLKVPQMPSLLQYLLWVFLPDQDQRSQLILPPPVHVDYRAACFCHRNLIEIGYVCSVCLSIFCNFSPICTTCETAFKISLPPVLKAKKKKLKMSS.

Residues 269-286 (CSVCLSIFCNFSPICTTC) form a C4-type zinc finger.

Belongs to the TFB4 family. In terms of assembly, part of a TFIID-containing RNA polymerase II pre-initiation complex that is composed of TBP and at least GTF2A1, GTF2A2, GTF2E1, GTF2E2, GTF2F1, GTF2H2, GTF2H3, GTF2H4, GTF2H5, GTF2B, TCEA1, ERCC2, ERCC3, TAF1, TAF2, TAF3, TAF4, TAF5, TAF6, TAF7, TAF8, TAF9, TAF10, TAF11, TAF12 and TAF13. Component of the 7-subunit TFIIH core complex composed of XPB/ERCC3, XPD/ERCC2, GTF2H1, GTF2H2, GTF2H3, GTF2H4 and GTF2H5, which is active in NER. The core complex associates with the 3-subunit CDK-activating kinase (CAK) module composed of CCNH/cyclin H, CDK7 and MNAT1 to form the 10-subunit holoenzyme (holo-TFIIH) active in transcription. Interacts with RARA; the interaction requires prior phosphorylation of RARA on 'Ser-369' which then enhances interaction of RARA with CDK7.

The protein resides in the nucleus. Component of the general transcription and DNA repair factor IIH (TFIIH) core complex, which is involved in general and transcription-coupled nucleotide excision repair (NER) of damaged DNA and, when complexed to CAK, in RNA transcription by RNA polymerase II. In NER, TFIIH acts by opening DNA around the lesion to allow the excision of the damaged oligonucleotide and its replacement by a new DNA fragment. In transcription, TFIIH has an essential role in transcription initiation. When the pre-initiation complex (PIC) has been established, TFIIH is required for promoter opening and promoter escape. Phosphorylation of the C-terminal tail (CTD) of the largest subunit of RNA polymerase II by the kinase module CAK controls the initiation of transcription. The protein is General transcription factor IIH subunit 3 (GTF2H3) of Bos taurus (Bovine).